The following is a 508-amino-acid chain: Catalase (508 aa).

Active-site residues include His-63 and Asn-136. Tyr-346 contributes to the heme binding site.

It belongs to the catalase family. Homohexamer. Heme is required as a cofactor.

The protein resides in the cytoplasm. The enzyme catalyses 2 H2O2 = O2 + 2 H2O. Decomposes hydrogen peroxide into water and oxygen; serves to protect cells from the toxic effects of hydrogen peroxide. The chain is Catalase (katA) from Haemophilus influenzae (strain ATCC 51907 / DSM 11121 / KW20 / Rd).